Consider the following 428-residue polypeptide: Anaerobic glycerol-3-phosphate dehydrogenase subunit B (428 aa).

This sequence belongs to the anaerobic G-3-P dehydrogenase subunit B family. In terms of assembly, composed of a catalytic GlpA/B dimer and of membrane bound GlpC. FMN is required as a cofactor.

It carries out the reaction a quinone + sn-glycerol 3-phosphate = dihydroxyacetone phosphate + a quinol. It participates in polyol metabolism; glycerol degradation via glycerol kinase pathway; glycerone phosphate from sn-glycerol 3-phosphate (anaerobic route): step 1/1. Its function is as follows. Conversion of glycerol 3-phosphate to dihydroxyacetone. Uses fumarate or nitrate as electron acceptor. This Pasteurella multocida (strain Pm70) protein is Anaerobic glycerol-3-phosphate dehydrogenase subunit B.